We begin with the raw amino-acid sequence, 218 residues long: Thiopurine S-methyltransferase (218 aa).

4 residues coordinate S-adenosyl-L-methionine: Trp-10, Leu-45, Glu-66, and Arg-123.

The protein belongs to the class I-like SAM-binding methyltransferase superfamily. TPMT family.

Its subcellular location is the cytoplasm. The enzyme catalyses S-adenosyl-L-methionine + a thiopurine = S-adenosyl-L-homocysteine + a thiopurine S-methylether.. Involved in the biological cycling of tellurium and selenium. Tellurium resistance (Ter) mechanism. This is Thiopurine S-methyltransferase from Pseudomonas syringae pv. pisi.